Reading from the N-terminus, the 61-residue chain is Sperm protamine P1 (61 aa).

Positions 1-61 (MARYRHSRSR…RRYSRRRRRY (61 aa)) are disordered.

Belongs to the protamine P1 family. Testis.

It localises to the nucleus. The protein localises to the chromosome. In terms of biological role, protamines substitute for histones in the chromatin of sperm during the haploid phase of spermatogenesis. They compact sperm DNA into a highly condensed, stable and inactive complex. The protein is Sperm protamine P1 (PRM1) of Potorous longipes (Long-footed potoroo).